A 39-amino-acid polypeptide reads, in one-letter code: Cytochrome b559 subunit beta (39 aa).

The helical transmembrane segment at 14–30 threads the bilayer; it reads WLAIHGLAVPTVFFLGS. A heme-binding site is contributed by histidine 18.

As to quaternary structure, heterodimer of an alpha subunit and a beta subunit. PSII is composed of 1 copy each of membrane proteins PsbA, PsbB, PsbC, PsbD, PsbE, PsbF, PsbH, PsbI, PsbJ, PsbK, PsbL, PsbM, PsbT, PsbX, PsbY, PsbZ, Psb30/Ycf12, at least 3 peripheral proteins of the oxygen-evolving complex and a large number of cofactors. It forms dimeric complexes. Heme b is required as a cofactor. In terms of processing, the N-terminus is blocked.

Its subcellular location is the plastid. The protein localises to the chloroplast thylakoid membrane. In terms of biological role, this b-type cytochrome is tightly associated with the reaction center of photosystem II (PSII). PSII is a light-driven water:plastoquinone oxidoreductase that uses light energy to abstract electrons from H(2)O, generating O(2) and a proton gradient subsequently used for ATP formation. It consists of a core antenna complex that captures photons, and an electron transfer chain that converts photonic excitation into a charge separation. This Spinacia oleracea (Spinach) protein is Cytochrome b559 subunit beta.